The following is a 453-amino-acid chain: MDRTINVILKPLRRFAIQKPNASLLLFAATIVAMVLANSPWADRYHQLLAFPIDLQAGQFNFFAHHGETMSMLAFVNDALMAVFFFVIGLEIKQEVLIGELSSVRKALLPIIAACGGMIVPVLFYMLVCNTPPEVNGAAIPMATDIAFALAVLGLLGKRVPLSMRIFLTALAVVDDIGGIIIIALFYSGHIAFEPLLISLIVLALLYVGGKFRVHNRLFFYIGGFIVWLLFLESGIHPTIAGVLIAFTVPARPVVKLDDFTCDMTGYLNMLDYTEVRQSRKAEVLTPTQIQVLNNIHTLADKTISPLQTIADKLHPLVNYVILPLFAFVNAGVTFGDIQPQTLVNVPLAVFVGLFVGKTLGIFSFSYLFACTPFASMPTGMSKRNLFGVSMLGGIGFTVALFIANLSFDGSTAAGADLLNQAKLGVFTGSFISGLCGYLVLKWVLPKEKVETI.

The next 11 helical transmembrane spans lie at 22–42 (ASLLLFAATIVAMVLANSPWA), 72–92 (MLAFVNDALMAVFFFVIGLEI), 108–128 (LLPIIAACGGMIVPVLFYMLV), 137–157 (GAAIPMATDIAFALAVLGLLG), 166–186 (IFLTALAVVDDIGGIIIIALF), 189–209 (GHIAFEPLLISLIVLALLYVG), 218–238 (LFFYIGGFIVWLLFLESGIHP), 316–336 (PLVNYVILPLFAFVNAGVTFG), 343–363 (LVNVPLAVFVGLFVGKTLGIF), 386–406 (LFGVSMLGGIGFTVALFIANL), and 424–444 (LGVFTGSFISGLCGYLVLKWV).

It belongs to the NhaA Na(+)/H(+) (TC 2.A.33) antiporter family.

It is found in the cell inner membrane. The enzyme catalyses Na(+)(in) + 2 H(+)(out) = Na(+)(out) + 2 H(+)(in). Its function is as follows. Na(+)/H(+) antiporter that extrudes sodium in exchange for external protons. This is Na(+)/H(+) antiporter NhaA from Parabacteroides distasonis (strain ATCC 8503 / DSM 20701 / CIP 104284 / JCM 5825 / NCTC 11152).